Consider the following 207-residue polypeptide: Small ribosomal subunit protein uS4 (207 aa).

The disordered stretch occupies residues 31–55 (KCKLDSKPGQHGRTSGARTSDYGTQ). Polar residues predominate over residues 42-53 (GRTSGARTSDYG). The S4 RNA-binding domain maps to 97–160 (SRLDNVVYRM…KKQARIIEAL (64 aa)).

It belongs to the universal ribosomal protein uS4 family. Part of the 30S ribosomal subunit. Contacts protein S5. The interaction surface between S4 and S5 is involved in control of translational fidelity.

Its function is as follows. One of the primary rRNA binding proteins, it binds directly to 16S rRNA where it nucleates assembly of the body of the 30S subunit. Functionally, with S5 and S12 plays an important role in translational accuracy. The sequence is that of Small ribosomal subunit protein uS4 from Burkholderia vietnamiensis (strain G4 / LMG 22486) (Burkholderia cepacia (strain R1808)).